The sequence spans 117 residues: Large ribosomal subunit protein eL8 (117 aa).

This sequence belongs to the eukaryotic ribosomal protein eL8 family. As to quaternary structure, part of the 50S ribosomal subunit. Probably part of the RNase P complex.

The protein resides in the cytoplasm. Its function is as follows. Multifunctional RNA-binding protein that recognizes the K-turn motif in ribosomal RNA, the RNA component of RNase P, box H/ACA, box C/D and box C'/D' sRNAs. In Methanocaldococcus jannaschii (strain ATCC 43067 / DSM 2661 / JAL-1 / JCM 10045 / NBRC 100440) (Methanococcus jannaschii), this protein is Large ribosomal subunit protein eL8.